The following is a 372-amino-acid chain: Glutamate 5-kinase (372 aa).

Lys14 contributes to the ATP binding site. Residues Ser54, Asp141, and Asn153 each coordinate substrate. Residue 173 to 174 (TD) coordinates ATP. Residues 280–358 (RGRVVIDAGA…SEIESVLGHL (79 aa)) form the PUA domain.

The protein belongs to the glutamate 5-kinase family.

Its subcellular location is the cytoplasm. It catalyses the reaction L-glutamate + ATP = L-glutamyl 5-phosphate + ADP. It participates in amino-acid biosynthesis; L-proline biosynthesis; L-glutamate 5-semialdehyde from L-glutamate: step 1/2. In terms of biological role, catalyzes the transfer of a phosphate group to glutamate to form L-glutamate 5-phosphate. This is Glutamate 5-kinase from Cupriavidus pinatubonensis (strain JMP 134 / LMG 1197) (Cupriavidus necator (strain JMP 134)).